The primary structure comprises 61 residues: MAKKTVKVTQVKSSSGRLKAHRACISGLGLRRIGHTVEVEDTPSVRGMINKVYYMVQVEGE.

The protein belongs to the universal ribosomal protein uL30 family. As to quaternary structure, part of the 50S ribosomal subunit.

This is Large ribosomal subunit protein uL30 from Saccharophagus degradans (strain 2-40 / ATCC 43961 / DSM 17024).